Reading from the N-terminus, the 151-residue chain is MLKEFKEFALKGNVVDMAVGIIIGGAFTGIVKSLVGDVLTPPLGLLLNGVDFTNLFVVLKEGATPGPYLALEQAQSAGAVTLNYGLFINAFISFVIMAVAVFFLVRGINRLRKMTEKPPEPAAAPDTKECPFCFSAIPVKAVRCPNCTSQL.

Helical transmembrane passes span 19-39 (VGIIIGGAFTGIVKSLVGDVL) and 85-105 (GLFINAFISFVIMAVAVFFLV).

Belongs to the MscL family. Homopentamer.

The protein localises to the cell inner membrane. In terms of biological role, channel that opens in response to stretch forces in the membrane lipid bilayer. May participate in the regulation of osmotic pressure changes within the cell. The chain is Large-conductance mechanosensitive channel from Chlorobaculum parvum (strain DSM 263 / NCIMB 8327) (Chlorobium vibrioforme subsp. thiosulfatophilum).